The chain runs to 465 residues: MAKTLYQKVFDAHVVREVEGETPLIYIDRHLVHEVTSPQAFDGLRAMNRQLRRPDLTWATMDHNVSTTTKDIAASGEMARIQMETLAANCKEFGVRLYDLNHKYQGIVHVMGPELGITLPGTTIVCGDSHTATHGAFGSLAFGIGTSEVEHVMATQTLKQGRAKTMRISVNGKLAAGISAKDVVLAIIGRVGHAGGTGYVVEFAGEAIEGLTMEGRMTVCNMAIELGAKAGMIAPDQTTIDYIRGKEFAPKGETLEQAIAYWQSLKSDEGARFDAEVVLDAADIAPQVTWGTNPGQVIAVNEPIPAPESFSDLMEQQSARKALAYMDLQPGQKLSDVAIDKVFIGSCTNSRIEDLRAAAAIARGRKVAAGVQALVVPGSEQVKAQAEAEGLDKIFIEAGFEWRLPGCSMCLAMNNDRLQPGERCASTSNRNFEGRQGRAGRTHLVSPAMAAAAAVTGRFADIRAL.

Residues Cys347, Cys407, and Cys410 each contribute to the [4Fe-4S] cluster site.

Belongs to the aconitase/IPM isomerase family. LeuC type 1 subfamily. In terms of assembly, heterodimer of LeuC and LeuD. [4Fe-4S] cluster is required as a cofactor.

The enzyme catalyses (2R,3S)-3-isopropylmalate = (2S)-2-isopropylmalate. It participates in amino-acid biosynthesis; L-leucine biosynthesis; L-leucine from 3-methyl-2-oxobutanoate: step 2/4. Its function is as follows. Catalyzes the isomerization between 2-isopropylmalate and 3-isopropylmalate, via the formation of 2-isopropylmaleate. The chain is 3-isopropylmalate dehydratase large subunit from Aeromonas hydrophila subsp. hydrophila (strain ATCC 7966 / DSM 30187 / BCRC 13018 / CCUG 14551 / JCM 1027 / KCTC 2358 / NCIMB 9240 / NCTC 8049).